We begin with the raw amino-acid sequence, 237 residues long: (5-formylfuran-3-yl)methyl phosphate synthase (237 aa).

The Schiff-base intermediate with substrate role is filled by Lys29. The active-site Proton acceptor is Lys87.

Belongs to the MfnB family.

The catalysed reaction is 2 D-glyceraldehyde 3-phosphate = 4-(hydroxymethyl)-2-furancarboxaldehyde phosphate + phosphate + 2 H2O. It participates in cofactor biosynthesis; methanofuran biosynthesis. In terms of biological role, catalyzes the formation of 4-(hydroxymethyl)-2-furancarboxaldehyde phosphate (4-HFC-P) from two molecules of glyceraldehyde-3-P (GA-3-P). This Methanopyrus kandleri (strain AV19 / DSM 6324 / JCM 9639 / NBRC 100938) protein is (5-formylfuran-3-yl)methyl phosphate synthase.